The chain runs to 658 residues: Glycogen debranching enzyme (658 aa).

D336 acts as the Nucleophile in catalysis. E371 acts as the Proton donor in catalysis. A disordered region spans residues 459 to 486 (EANGEENRDGTNSNYSDNNGKEGLGGPL).

Belongs to the glycosyl hydrolase 13 family.

It carries out the reaction Hydrolysis of (1-&gt;6)-alpha-D-glucosidic linkages to branches with degrees of polymerization of three or four glucose residues in limit dextrin.. It functions in the pathway glycan degradation; glycogen degradation. Its function is as follows. Removes maltotriose and maltotetraose chains that are attached by 1,6-alpha-linkage to the limit dextrin main chain, generating a debranched limit dextrin. This is Glycogen debranching enzyme from Salmonella gallinarum (strain 287/91 / NCTC 13346).